We begin with the raw amino-acid sequence, 168 residues long: N-alpha-acetyltransferase (168 aa).

Residues 13 to 168 (YQIRLATLSD…EDAYLMAAPL (156 aa)) enclose the N-acetyltransferase domain. Tyr38 provides a ligand contact to substrate. Position 89 (His89) interacts with Zn(2+). Acetyl-CoA contacts are provided by residues 93 to 95 (IAV) and 101 to 106 (KIGVGT). CoA-binding positions include 93-95 (IAV) and 101-106 (KIGVGT). Glu128 contacts Zn(2+). Acetyl-CoA-binding positions include Asn133 and 140–142 (YKK). Asn133 provides a ligand contact to CoA. Tyr155 lines the substrate pocket.

The protein belongs to the acetyltransferase family. ARD1 subfamily. As to quaternary structure, homodimer.

Its subcellular location is the cytoplasm. The enzyme catalyses N-terminal L-alanyl-[protein] + acetyl-CoA = N-terminal N(alpha)-acetyl-L-alanyl-[protein] + CoA + H(+). It carries out the reaction N-terminal L-seryl-[protein] + acetyl-CoA = N-terminal N(alpha)-acetyl-L-seryl-[protein] + CoA + H(+). It catalyses the reaction N-terminal L-methionyl-L-leucyl-[protein] + acetyl-CoA = N-terminal N(alpha)-acetyl-L-methionyl-L-leucyl-[protein] + CoA + H(+). The catalysed reaction is N-terminal L-methionyl-L-glutamyl-[protein] + acetyl-CoA = N-terminal N(alpha)-acetyl-L-methionyl-L-glutamyl-[protein] + CoA + H(+). Its function is as follows. Displays alpha (N-terminal) acetyltransferase activity. Catalyzes the covalent attachment of an acetyl moiety from acetyl-CoA to the free alpha-amino group at the N-terminus of a protein. This chain is N-alpha-acetyltransferase, found in Sulfolobus acidocaldarius (strain ATCC 33909 / DSM 639 / JCM 8929 / NBRC 15157 / NCIMB 11770).